The primary structure comprises 298 residues: Lipoyl synthase (298 aa).

[4Fe-4S] cluster contacts are provided by C40, C45, C51, C67, C71, C74, and S280. The Radical SAM core domain occupies 53-269 (AVRKTATFMI…KEIALSKGFS (217 aa)).

The protein belongs to the radical SAM superfamily. Lipoyl synthase family. Requires [4Fe-4S] cluster as cofactor.

It localises to the cytoplasm. It carries out the reaction [[Fe-S] cluster scaffold protein carrying a second [4Fe-4S](2+) cluster] + N(6)-octanoyl-L-lysyl-[protein] + 2 oxidized [2Fe-2S]-[ferredoxin] + 2 S-adenosyl-L-methionine + 4 H(+) = [[Fe-S] cluster scaffold protein] + N(6)-[(R)-dihydrolipoyl]-L-lysyl-[protein] + 4 Fe(3+) + 2 hydrogen sulfide + 2 5'-deoxyadenosine + 2 L-methionine + 2 reduced [2Fe-2S]-[ferredoxin]. Its pathway is protein modification; protein lipoylation via endogenous pathway; protein N(6)-(lipoyl)lysine from octanoyl-[acyl-carrier-protein]. Catalyzes the radical-mediated insertion of two sulfur atoms into the C-6 and C-8 positions of the octanoyl moiety bound to the lipoyl domains of lipoate-dependent enzymes, thereby converting the octanoylated domains into lipoylated derivatives. The chain is Lipoyl synthase from Bacillus cytotoxicus (strain DSM 22905 / CIP 110041 / 391-98 / NVH 391-98).